The following is a 236-amino-acid chain: Calcium-binding lectin RapA2 (236 aa).

It is found in the secreted. Interacts specifically in a calcium-dependent manner with the acidic exopolysaccharide (EPS) and capsular polysaccharide produced by R.leguminosarum. Could be involved in the development of the biofilm matrix made of EPS. This chain is Calcium-binding lectin RapA2, found in Rhizobium johnstonii (strain DSM 114642 / LMG 32736 / 3841) (Rhizobium leguminosarum bv. viciae).